Consider the following 500-residue polypeptide: Na(+)/H(+) antiporter NhaB (500 aa).

13 helical membrane-spanning segments follow: residues H11–L31, L34–F54, M58–L78, V96–F116, I121–F141, F145–V165, L205–P225, F241–V261, I311–I331, F350–I370, M394–I414, A450–I470, and M477–T497.

Belongs to the NhaB Na(+)/H(+) (TC 2.A.34) antiporter family.

It localises to the cell inner membrane. The enzyme catalyses 2 Na(+)(in) + 3 H(+)(out) = 2 Na(+)(out) + 3 H(+)(in). Functionally, na(+)/H(+) antiporter that extrudes sodium in exchange for external protons. The polypeptide is Na(+)/H(+) antiporter NhaB (Pseudomonas putida (strain ATCC 700007 / DSM 6899 / JCM 31910 / BCRC 17059 / LMG 24140 / F1)).